The sequence spans 60 residues: Temporin-CG1 (60 aa).

An N-terminal signal peptide occupies residues 1–22; the sequence is MFTLKKSLLLLFFLATINLSLC. The propeptide at 23 to 43 is removed in mature form; it reads EQERNAEEERRDDDERNAEVE.

Expressed by the skin glands.

It is found in the secreted. Antimicrobial peptide active against a variety of Gram-positive and some Gram-negative bacterial strains. Has antifungal activity against a slime mold isolate. Has weak hemolytic activity against human erythrocytes. The sequence is that of Temporin-CG1 from Amolops chunganensis (Chungan torrent frog).